The following is a 328-amino-acid chain: Lipoyl synthase (328 aa).

The [4Fe-4S] cluster site is built by Cys-75, Cys-80, Cys-86, Cys-101, Cys-105, Cys-108, and Ser-315. One can recognise a Radical SAM core domain in the interval 87–304 (FNHGTATFMI…EREAKKMGYE (218 aa)).

It belongs to the radical SAM superfamily. Lipoyl synthase family. Requires [4Fe-4S] cluster as cofactor.

It is found in the cytoplasm. The catalysed reaction is [[Fe-S] cluster scaffold protein carrying a second [4Fe-4S](2+) cluster] + N(6)-octanoyl-L-lysyl-[protein] + 2 oxidized [2Fe-2S]-[ferredoxin] + 2 S-adenosyl-L-methionine + 4 H(+) = [[Fe-S] cluster scaffold protein] + N(6)-[(R)-dihydrolipoyl]-L-lysyl-[protein] + 4 Fe(3+) + 2 hydrogen sulfide + 2 5'-deoxyadenosine + 2 L-methionine + 2 reduced [2Fe-2S]-[ferredoxin]. It functions in the pathway protein modification; protein lipoylation via endogenous pathway; protein N(6)-(lipoyl)lysine from octanoyl-[acyl-carrier-protein]: step 2/2. Functionally, catalyzes the radical-mediated insertion of two sulfur atoms into the C-6 and C-8 positions of the octanoyl moiety bound to the lipoyl domains of lipoate-dependent enzymes, thereby converting the octanoylated domains into lipoylated derivatives. The chain is Lipoyl synthase from Colwellia psychrerythraea (strain 34H / ATCC BAA-681) (Vibrio psychroerythus).